Consider the following 395-residue polypeptide: Sulfate adenylyltransferase (395 aa).

This sequence belongs to the sulfate adenylyltransferase family.

The catalysed reaction is sulfate + ATP + H(+) = adenosine 5'-phosphosulfate + diphosphate. It participates in sulfur metabolism; hydrogen sulfide biosynthesis; sulfite from sulfate: step 1/3. This is Sulfate adenylyltransferase from Synechococcus elongatus (strain ATCC 33912 / PCC 7942 / FACHB-805) (Anacystis nidulans R2).